Consider the following 342-residue polypeptide: Vancomycin B-type resistance protein VanB (342 aa).

ATP is bound by residues Lys-132, 168–170, 176–177, 206–213, and Phe-240; these read FVK, SS, and EQAISGCE. The region spanning 136 to 337 is the ATP-grasp domain; the sequence is YILTKNAGIA…LPALIDSLIT (202 aa). A substrate-binding site is contributed by His-243. 303 to 304 serves as a coordination point for ATP; that stretch reads NE. Residues Glu-304 and Asn-306 each contribute to the Mg(2+) site.

The protein belongs to the D-alanine--D-alanine ligase family. Mg(2+) serves as cofactor. The cofactor is Mn(2+).

It localises to the cell membrane. The enzyme catalyses (R)-lactate + D-alanine + ATP = D-alanyl-(R)-lactate + ADP + phosphate. Functionally, required for high-level resistance to glycopeptides antibiotics. D-Ala--D-Ala ligase of altered specificity which catalyzes ester bond formation between D-Ala and various D-hydroxy acids; producing a peptidoglycan which does not terminate in D-alanine but in D-lactate, thus preventing vancomycin binding. The protein is Vancomycin B-type resistance protein VanB (vanB) of Enterococcus faecalis (strain ATCC 700802 / V583).